Here is a 65-residue protein sequence, read N- to C-terminus: MKAKEIREMTNRELEAKLDELKEELFNLRFQVATGQIENPMRLKQVRKDIARVKTILRERELNIS.

This sequence belongs to the universal ribosomal protein uL29 family.

In Natranaerobius thermophilus (strain ATCC BAA-1301 / DSM 18059 / JW/NM-WN-LF), this protein is Large ribosomal subunit protein uL29.